A 437-amino-acid chain; its full sequence is MAVSKVYARSVYDSRGNPTVEVELTTEKGVFRSIVPSGASTGIHEALEMRDGDKSKWLGKGVENAVKNVNDVIAPAFVKANVDIKDQKAVDDLLLSLDGTANKSKLGANAILGVSMAAARAAAAEKNVPLYQHLADLSDSKTSPFVLPVPFLNVLNGGSHAGGALALQEFMIAPTGAKSFREAMRIGSEVYHNLKSLTKKRYGSSAGNVGDEGGVAPDIQTAEEALDLIVDAIKAAGHEGKVKIGLDCASSEFFKDGKYDLDFKNPNSDASKWLSGPQLADLYHSLVKKYPIVSIEDPFAEDDWEAWSHFFKTAGVQIVADDLTVTNPKRIATAIEKKAADALLLKVNQIGSLSESIKAAQDSFAAGWGVMVSHRSGETEDTFIADLVVGLRTGQIKTGAPARSERLAKLNQLLRIEEELGDKAVYAGDNFHHGFKL.

Substrate is bound by residues His160 and Glu169. Glu212 functions as the Proton donor in the catalytic mechanism. Positions 247, 296, and 321 each coordinate Mg(2+). 2 residues coordinate substrate: Glu296 and Asp321. The Proton acceptor role is filled by Lys346. Substrate is bound by residues Ser373–Ser376 and Lys397.

The protein belongs to the enolase family. In terms of assembly, homodimer. Mg(2+) serves as cofactor.

It is found in the cytoplasm. The catalysed reaction is (2R)-2-phosphoglycerate = phosphoenolpyruvate + H2O. It functions in the pathway carbohydrate degradation; glycolysis; pyruvate from D-glyceraldehyde 3-phosphate: step 4/5. The sequence is that of Enolase 2 (ENO2) from Candida glabrata (strain ATCC 2001 / BCRC 20586 / JCM 3761 / NBRC 0622 / NRRL Y-65 / CBS 138) (Yeast).